The following is a 229-amino-acid chain: ATP-dependent dethiobiotin synthetase BioD (229 aa).

15–20 serves as a coordination point for ATP; the sequence is EIGKTL. Residue Thr-19 coordinates Mg(2+). Residue Lys-40 is part of the active site. ATP contacts are provided by residues Asp-57, 118–121, and 207–209; these read EGVG and PRL. Mg(2+) is bound by residues Asp-57 and Glu-118.

The protein belongs to the dethiobiotin synthetase family. Homodimer. The cofactor is Mg(2+).

The protein resides in the cytoplasm. The catalysed reaction is (7R,8S)-7,8-diammoniononanoate + CO2 + ATP = (4R,5S)-dethiobiotin + ADP + phosphate + 3 H(+). Its pathway is cofactor biosynthesis; biotin biosynthesis; biotin from 7,8-diaminononanoate: step 1/2. Its function is as follows. Catalyzes a mechanistically unusual reaction, the ATP-dependent insertion of CO2 between the N7 and N8 nitrogen atoms of 7,8-diaminopelargonic acid (DAPA, also called 7,8-diammoniononanoate) to form a ureido ring. In Ralstonia nicotianae (strain ATCC BAA-1114 / GMI1000) (Ralstonia solanacearum), this protein is ATP-dependent dethiobiotin synthetase BioD.